The following is a 158-amino-acid chain: Protein Smg homolog (158 aa).

It belongs to the Smg family.

The polypeptide is Protein Smg homolog (Thioalkalivibrio sulfidiphilus (strain HL-EbGR7)).